Reading from the N-terminus, the 608-residue chain is Probable adenylate kinase 5, chloroplastic (608 aa).

The span at 1–20 (MAASSSSSSPAAASAPFAAP) shows a compositional bias: low complexity. The interval 1 to 44 (MAASSSSSSPAAASAPFAAPGPHRRPGLALRPSPPTPPSSSLSC) is disordered. The transit peptide at 1–75 (MAASSSSSSP…GPRGMGLRCR (75 aa)) directs the protein to the chloroplast. An ATP-binding site is contributed by 99–104 (ASGKGT). Residues 119-148 (STGDLLRAEVSSGTEIGKKAKEYMDNGMLV) form an NMP region. AMP-binding positions include Thr120, Arg125, 146-148 (MLV), 175-178 (GYPR), and Gln182. ATP-binding positions include Arg209, Arg213, and 222–223 (IY). An LID region spans residues 212 to 245 (GRRLDPETGKIYHIKNFPPENDEVSARLVTRSDD). Arg242 and Arg253 together coordinate AMP.

This sequence belongs to the adenylate kinase family.

The protein localises to the plastid. It is found in the chloroplast. It carries out the reaction AMP + ATP = 2 ADP. In terms of biological role, catalyzes the reversible transfer of the terminal phosphate group between ATP and AMP. Plays an important role in cellular energy homeostasis and in adenine nucleotide metabolism. The sequence is that of Probable adenylate kinase 5, chloroplastic from Oryza sativa subsp. japonica (Rice).